Here is a 621-residue protein sequence, read N- to C-terminus: uncharacterized protein (621 aa).

Residues serine 269, serine 271, serine 274, serine 290, and serine 292 each carry the phosphoserine modification. LRR repeat units follow at residues 333–354 (QLLY…VFLS), 357–379 (SLVS…GELP), 380–401 (QLCS…YHIS), 404–425 (HLQI…ENVP), 426–447 (SLEK…RRLV), and 451–472 (NFEE…YRIT). The disordered stretch occupies residues 552–581 (SKNASGGDTSSNVSLLNGSASEEIPQNTES).

It localises to the cytoplasm. The protein localises to the nucleus. It is found in the vacuole membrane. This is an uncharacterized protein from Schizosaccharomyces pombe (strain 972 / ATCC 24843) (Fission yeast).